The following is a 435-amino-acid chain: Methanethiol oxidase (435 aa).

The signal sequence occupies residues 1–24 (MKKHLLAGACALAMGFAVIPGTFA).

Belongs to the selenium-binding protein family. As to quaternary structure, homotetramer. Cu cation serves as cofactor.

Its subcellular location is the periplasm. The enzyme catalyses methanethiol + O2 + H2O = hydrogen sulfide + formaldehyde + H2O2 + H(+). The protein operates within organosulfur degradation. With respect to regulation, inhibited by EDTA but not by EGTA. Functionally, catalyzes the oxidation of methanethiol. Can also degrade ethanethiol, but not methanol, methylamine or dimethylsulfide. The protein is Methanethiol oxidase of Hyphomicrobium sp.